We begin with the raw amino-acid sequence, 151 residues long: UPF0102 protein Ava_4800 (151 aa).

It belongs to the UPF0102 family.

The polypeptide is UPF0102 protein Ava_4800 (Trichormus variabilis (strain ATCC 29413 / PCC 7937) (Anabaena variabilis)).